Here is a 228-residue protein sequence, read N- to C-terminus: MTGGEQKPNEIIGVRRGLFGVRGSGDTSGYGGLVQPISLPVSSNRPYGGYFDQVVDRLESVLAEQENVTYADAVEGVVVYRDQLTIHVKAEHLVQVAQSLRDDPQLRFELSLGVSGVHYPDDSARELHAVYPLMSITWNRRIMLEVAVPESDPHIPSLNAVYPTTDWHERETYDFFGIIFDDHPALTRIQMPDDWDGHPQRKDYPLGGVPVEYHGATIAPPDQRRSYN.

Belongs to the complex I 30 kDa subunit family. As to quaternary structure, NDH-1 is composed of 14 different subunits. Subunits NuoB, C, D, E, F, and G constitute the peripheral sector of the complex.

The protein localises to the cell membrane. It carries out the reaction a quinone + NADH + 5 H(+)(in) = a quinol + NAD(+) + 4 H(+)(out). NDH-1 shuttles electrons from NADH, via FMN and iron-sulfur (Fe-S) centers, to quinones in the respiratory chain. The immediate electron acceptor for the enzyme in this species is believed to be a menaquinone. Couples the redox reaction to proton translocation (for every two electrons transferred, four hydrogen ions are translocated across the cytoplasmic membrane), and thus conserves the redox energy in a proton gradient. This Mycobacteroides abscessus (strain ATCC 19977 / DSM 44196 / CCUG 20993 / CIP 104536 / JCM 13569 / NCTC 13031 / TMC 1543 / L948) (Mycobacterium abscessus) protein is NADH-quinone oxidoreductase subunit C.